Reading from the N-terminus, the 272-residue chain is Insulin-like growth factor-binding protein 5 (272 aa).

The first 20 residues, Met-1–Ser-20, serve as a signal peptide directing secretion. Positions Ser-23 to Glu-103 constitute an IGFBP N-terminal domain. 6 cysteine pairs are disulfide-bonded: Cys-27/Cys-53, Cys-30/Cys-55, Cys-38/Cys-56, Cys-45/Cys-59, Cys-67/Cys-80, and Cys-74/Cys-100. Residues Lys-111–Pro-122 show a composition bias toward basic and acidic residues. A disordered region spans residues Lys-111 to Glu-130. Ser-116 is modified (phosphoserine; by FAM20C). Thr-172 carries O-linked (HexNAc...) threonine glycosylation. Positions Gln-189–Cys-263 constitute a Thyroglobulin type-1 domain. Disulfide bonds link Cys-192-Cys-219, Cys-230-Cys-241, and Cys-243-Cys-263.

As to quaternary structure, interacts with IGF1; this interaction enhances the growth stimulatory effects of IGF1 on fibroblasts. Interacts with CAV1; this interaction allows trafficking of IGFBP5 from the plasma membrane to the nucleus. Interacts with NCL; this interaction is necessary for IGFBP5 localization to the nucleus. Post-translationally, cleaved by C1S in extracellular space. In terms of tissue distribution, osteosarcoma, and at lower levels in liver, kidney and brain.

Its subcellular location is the secreted. The protein localises to the cytoplasm. The protein resides in the nucleus. Its function is as follows. Multifunctional protein that plays a critical role in regulating the availability of IGFs to their receptors and thereby regulates IGF-mediated cellular processes including proliferation, differentiation, and apoptosis in a cell-type specific manner. Increases the cell proliferation of osteoblasts, intestinal smooth muscle cells and neuroblastoma cells. Enhances adhesion and survival of epithelial cells but decreases adhesion of mesenchymal cells. Once secreted, acts as a major mediator of mTORC1-dependent feedback inhibition of IGF1 signaling. Also plays a role in the induction of extracellular matrix (ECM) production and deposition independently of its nuclear translocation and binding to IGFs. Acts itself as a growth factor that can act independently of IGFs to regulate bone formation. Acts as a ligand for the ROR1 receptor which triggers formation of ROR1/HER2 heterodimer to enhance CREB oncogenic signaling. The chain is Insulin-like growth factor-binding protein 5 (IGFBP5) from Homo sapiens (Human).